Reading from the N-terminus, the 332-residue chain is Malate dehydrogenase (332 aa).

Residues 11 to 16 (GAGNVG) and D35 contribute to the NAD(+) site. The substrate site is built by R97 and R103. NAD(+) contacts are provided by residues N110 and 133–135 (VTN). Positions 135 and 166 each coordinate substrate. The active-site Proton acceptor is the H190.

The protein belongs to the LDH/MDH superfamily. MDH type 3 family.

It carries out the reaction (S)-malate + NAD(+) = oxaloacetate + NADH + H(+). Functionally, catalyzes the reversible oxidation of malate to oxaloacetate. The protein is Malate dehydrogenase of Hydrogenobaculum sp. (strain Y04AAS1).